A 437-amino-acid polypeptide reads, in one-letter code: Methylenetetrahydrofolate--tRNA-(uracil-5-)-methyltransferase TrmFO (437 aa).

Residue Gly-10 to Gly-15 participates in FAD binding.

The protein belongs to the MnmG family. TrmFO subfamily. The cofactor is FAD.

It is found in the cytoplasm. The enzyme catalyses uridine(54) in tRNA + (6R)-5,10-methylene-5,6,7,8-tetrahydrofolate + NADH + H(+) = 5-methyluridine(54) in tRNA + (6S)-5,6,7,8-tetrahydrofolate + NAD(+). The catalysed reaction is uridine(54) in tRNA + (6R)-5,10-methylene-5,6,7,8-tetrahydrofolate + NADPH + H(+) = 5-methyluridine(54) in tRNA + (6S)-5,6,7,8-tetrahydrofolate + NADP(+). In terms of biological role, catalyzes the folate-dependent formation of 5-methyl-uridine at position 54 (M-5-U54) in all tRNAs. In Brevibacillus brevis (strain 47 / JCM 6285 / NBRC 100599), this protein is Methylenetetrahydrofolate--tRNA-(uracil-5-)-methyltransferase TrmFO.